A 310-amino-acid chain; its full sequence is tRNA-splicing endonuclease subunit Sen34 (310 aa).

The tract at residues 119 to 177 is disordered; it reads GQAAKKQKLEQASGASSSQEAGSSQAAKEDETSDGQASGEQEEAGPSSSQAGPSNGVAP. Residues 128–144 are compositionally biased toward low complexity; that stretch reads EQASGASSSQEAGSSQA. Catalysis depends on residues Tyr-247, His-255, and Lys-286.

The protein belongs to the tRNA-intron endonuclease family. In terms of assembly, tRNA splicing endonuclease is a heterotetramer composed of TSEN2, TSEN15, TSEN34/LENG5 and TSEN54. tRNA splicing endonuclease complex also contains proteins of the pre-mRNA 3'-end processing machinery such as CLP1, CPSF1, CPSF4 and CSTF2.

The protein localises to the nucleus. Its subcellular location is the nucleolus. It catalyses the reaction pretRNA = a 3'-half-tRNA molecule with a 5'-OH end + a 5'-half-tRNA molecule with a 2',3'-cyclic phosphate end + an intron with a 2',3'-cyclic phosphate and a 5'-hydroxyl terminus.. In terms of biological role, constitutes one of the two catalytic subunit of the tRNA-splicing endonuclease complex, a complex responsible for identification and cleavage of the splice sites in pre-tRNA. It cleaves pre-tRNA at the 5'- and 3'-splice sites to release the intron. The products are an intron and two tRNA half-molecules bearing 2',3'-cyclic phosphate and 5'-OH termini. There are no conserved sequences at the splice sites, but the intron is invariably located at the same site in the gene, placing the splice sites an invariant distance from the constant structural features of the tRNA body. It probably carries the active site for 3'-splice site cleavage. The tRNA splicing endonuclease is also involved in mRNA processing via its association with pre-mRNA 3'-end processing factors, establishing a link between pre-tRNA splicing and pre-mRNA 3'-end formation, suggesting that the endonuclease subunits function in multiple RNA-processing events. The polypeptide is tRNA-splicing endonuclease subunit Sen34 (TSEN34) (Homo sapiens (Human)).